Here is a 969-residue protein sequence, read N- to C-terminus: Translation initiation factor IF-2 (969 aa).

Residues 50 to 370 form a disordered region; the sequence is SFASKSAPAN…QAPSVGGVRL (321 aa). Residues 54-76 show a composition bias toward low complexity; sequence KSAPANGAKPGPAASARPGAKPT. Pro residues predominate over residues 77–87; sequence PGGPRPGPRTP. A compositionally biased stretch (low complexity) spans 88-102; the sequence is APAASAPQAPAEQTA. Over residues 112 to 124 the composition is skewed to pro residues; the sequence is AVKPGPAPTPARP. A compositionally biased stretch (low complexity) spans 125–164; it reads AAPEAPAAKAAPEAPAQRPTPGGPRPGQQQQRPGAPAQGG. Residues 240-267 show a composition bias toward pro residues; the sequence is PGGPRPSPGSMPPRPNPGAMPQRTPRPG. A compositionally biased stretch (gly residues) spans 269–340; sequence SAGGRPGRPG…GAAGAFGRPG (72 aa). The segment covering 344–353 has biased composition (basic residues); that stretch reads RRGRKSKRQK. One can recognise a tr-type G domain in the interval 465–636; it reads VRPPVVTVMG…AVLLTADAAL (172 aa). The tract at residues 474 to 481 is G1; the sequence is GHVDHGKT. Residue 474–481 participates in GTP binding; it reads GHVDHGKT. The segment at 499–503 is G2; the sequence is GITQH. The interval 524–527 is G3; the sequence is DTPG. GTP-binding positions include 524-528 and 578-581; these read DTPGH and NKID. The G4 stretch occupies residues 578–581; that stretch reads NKID. Positions 614–616 are G5; it reads SAK.

Belongs to the TRAFAC class translation factor GTPase superfamily. Classic translation factor GTPase family. IF-2 subfamily.

Its subcellular location is the cytoplasm. Functionally, one of the essential components for the initiation of protein synthesis. Protects formylmethionyl-tRNA from spontaneous hydrolysis and promotes its binding to the 30S ribosomal subunits. Also involved in the hydrolysis of GTP during the formation of the 70S ribosomal complex. The sequence is that of Translation initiation factor IF-2 from Nocardia farcinica (strain IFM 10152).